We begin with the raw amino-acid sequence, 548 residues long: Protoporphyrinogen oxidase, chloroplastic (548 aa).

The N-terminal 50 residues, 1-50, are a transit peptide targeting the chloroplast; it reads MTTTPIANHPNIFTHQSSSSPLAFLNRTSFIPFSSISKRNSVNCNGWRTR. Residues 78–83, 101–102, and 123–126 each bind FAD; these read GAGISG, EA, and GPNS. Residues 265-279 show a composition bias toward basic and acidic residues; the sequence is KERSSTPKAPRDPRL. A disordered region spans residues 265 to 287; the sequence is KERSSTPKAPRDPRLPKPKGQTV. 522 to 524 serves as a coordination point for FAD; sequence VAL.

It belongs to the protoporphyrinogen/coproporphyrinogen oxidase family. Protoporphyrinogen oxidase subfamily. In terms of assembly, homodimer. The cofactor is FAD.

The protein localises to the plastid. The protein resides in the chloroplast. The enzyme catalyses protoporphyrinogen IX + 3 O2 = protoporphyrin IX + 3 H2O2. Its pathway is porphyrin-containing compound metabolism; protoporphyrin-IX biosynthesis; protoporphyrin-IX from protoporphyrinogen-IX: step 1/1. It functions in the pathway porphyrin-containing compound metabolism; chlorophyll biosynthesis. Functionally, catalyzes the 6-electron oxidation of protoporphyrinogen-IX to form protoporphyrin-IX. In Nicotiana tabacum (Common tobacco), this protein is Protoporphyrinogen oxidase, chloroplastic (PPXI).